We begin with the raw amino-acid sequence, 290 residues long: Pyridoxal kinase PdxY (290 aa).

Substrate contacts are provided by residues S12 and 47-48 (TQ). ATP contacts are provided by residues D114, E151, K184, and 211–214 (RPLL). D225 is a substrate binding site.

It belongs to the pyridoxine kinase family. PdxY subfamily. In terms of assembly, homodimer. Mg(2+) serves as cofactor.

It catalyses the reaction pyridoxal + ATP = pyridoxal 5'-phosphate + ADP + H(+). It functions in the pathway cofactor metabolism; pyridoxal 5'-phosphate salvage; pyridoxal 5'-phosphate from pyridoxal: step 1/1. In terms of biological role, pyridoxal kinase involved in the salvage pathway of pyridoxal 5'-phosphate (PLP). Catalyzes the phosphorylation of pyridoxal to PLP. In Pseudomonas putida (strain W619), this protein is Pyridoxal kinase PdxY.